Consider the following 646-residue polypeptide: Kinesin-like protein klp-20 (646 aa).

One can recognise a Kinesin motor domain in the interval 6–331; that stretch reads KVKVVVRCRP…LRYANRAKNI (326 aa). 91–98 contributes to the ATP binding site; the sequence is GQTGTGKT. A coiled-coil region spans residues 342 to 552; it reads KDAQLRKFQL…LRKELLLNIA (211 aa). The tract at residues 525–550 is interaction with klp-11; that stretch reads LEEDHQRQVEAMLDDIRQLRKELLLN. A disordered region spans residues 623 to 646; the sequence is TAEHRPRTSSKKHRASIRLQQLLT. Basic residues predominate over residues 629-638; sequence RTSSKKHRAS.

This sequence belongs to the TRAFAC class myosin-kinesin ATPase superfamily. Kinesin family. Kinesin II subfamily. In terms of assembly, component of the kinesin II motor complex, a heterotrimeric complex composed of kap-1, klp-11 and klp-20. Interacts (via C-terminus) with klp-11 (via C-terminus) to form a heterodimer. Furthermore, within the heterodimer, the C-termini of klp-20 and klp-11 interact to form a coiled coil (stalk) or tail domain, and this is necessary for association with kap-1, and kinesin II motor complex activity upon IFT cargo binding. Prior to cargo binding, the klp-11/klp-20 heterodimer is autoinhibited by the tail domain of the heterodimer, which folds onto the kinesin motor domain. Cargo binding to the heterodimer relieves the autoinhibition, and allows for an extended conformation of the tail domain, and function of the heterodimer.

It localises to the cell projection. The protein localises to the cilium. The protein resides in the cytoplasm. Its subcellular location is the cytoskeleton. Its function is as follows. Component of the kinesin II motor complex (composed of kap-1 and the heterodimeric motor proteins klp-11 and klp-20) which is required for intraflagellar transport (IFT). Heterodimerizes with klp-11 to form a 'processive' molecular motor upon IFT cargo binding, which, within the kinesin II motor complex, binds to and moves along microtubules in a unidirectional manner (without dissociation of the heterodimer), and in turn, is responsible for the IFT of cargo. Specifically, the kinesin II motor complex, together with the kinesin motor protein osm-3 moves along microtubules and is required for anterograde IFT along the middle segment of the sensory neuron cilia. In particular, the kinesin II motor complex delivers specific ciliary cargo proteins such as che-3 which are related to motility to ciliary tips. This is likely mediated by IFT complexes A and B. The protein is Kinesin-like protein klp-20 of Caenorhabditis elegans.